Consider the following 152-residue polypeptide: Protein SprT-like (152 aa).

The SprT-like domain occupies 13–148 (NYVKKVSIED…FACGYCHGRL (136 aa)). His72 is a Zn(2+) binding site. Glu73 is a catalytic residue. His76 lines the Zn(2+) pocket.

The protein belongs to the SprT family. Requires Zn(2+) as cofactor.

The protein localises to the cytoplasm. This is Protein SprT-like from Streptococcus agalactiae serotype III (strain NEM316).